A 245-amino-acid polypeptide reads, in one-letter code: Probable septum site-determining protein MinC (245 aa).

Residues R113 to P132 are compositionally biased toward basic and acidic residues. The disordered stretch occupies residues R113–P138.

This sequence belongs to the MinC family. As to quaternary structure, interacts with MinD and FtsZ.

Cell division inhibitor that blocks the formation of polar Z ring septums. Rapidly oscillates between the poles of the cell to destabilize FtsZ filaments that have formed before they mature into polar Z rings. Prevents FtsZ polymerization. The protein is Probable septum site-determining protein MinC of Pseudomonas fluorescens (strain SBW25).